We begin with the raw amino-acid sequence, 51 residues long: Large ribosomal subunit protein bL33 (51 aa).

This sequence belongs to the bacterial ribosomal protein bL33 family.

The chain is Large ribosomal subunit protein bL33 from Pseudoalteromonas translucida (strain TAC 125).